Reading from the N-terminus, the 65-residue chain is Large ribosomal subunit protein uL29 (65 aa).

The protein belongs to the universal ribosomal protein uL29 family.

The protein is Large ribosomal subunit protein uL29 of Parabacteroides distasonis (strain ATCC 8503 / DSM 20701 / CIP 104284 / JCM 5825 / NCTC 11152).